The chain runs to 1834 residues: Non-reducing polyketide synthase spyA (1834 aa).

Residues 91-255 (LAPLTVIIHL…TRIPIYGRYH (165 aa)) enclose the Starter acyltransferase (SAT) domain. Positions 385–801 (EHSIAVIGAA…GNNTAVIVCE (417 aa)) constitute a Ketosynthase family 3 (KS3) domain. Residues Cys551, His687, and His724 each act as for beta-ketoacyl synthase activity in the active site. In terms of domain architecture, Malonyl-CoA:ACP transacylase (MAT) spans 919-1164 (YEGSSLLRSH…KELGPCTWVE (246 aa)). Residues 1269–1398 (PLVYLLRDEG…GVISLRQERH (130 aa)) are N-terminal hotdog fold. The PKS/mFAS DH domain maps to 1269 to 1577 (PLVYLLRDEG…FVRITASSLN (309 aa)). A product template (PT) domain region spans residues 1269–1577 (PLVYLLRDEG…FVRITASSLN (309 aa)). The tract at residues 1428 to 1577 (AISLKEGIIY…FVRITASSLN (150 aa)) is C-terminal hotdog fold. Residues 1616–1690 (SDILSILSHL…TLCQEIQTQR (75 aa)) form the Carrier 1 domain. O-(pantetheine 4'-phosphoryl)serine is present on Ser1650. The segment at 1693 to 1720 (RLARASRTTTATRNTSFSLGRRTSSTES) is disordered. Residues 1697–1710 (ASRTTTATRNTSFS) show a composition bias toward low complexity. The Carrier 2 domain occupies 1731–1807 (SKSAAVLAQL…GLARLILASE (77 aa)). Residue Ser1767 is modified to O-(pantetheine 4'-phosphoryl)serine.

Pantetheine 4'-phosphate is required as a cofactor.

It carries out the reaction 2 malonyl-CoA + acetyl-CoA + 2 H(+) = triacetate lactone + 2 CO2 + 3 CoA. It participates in secondary metabolite biosynthesis; terpenoid biosynthesis. Its function is as follows. Non-reducing polyketide synthase; part of the gene cluster that mediates the biosynthesis of meroterpenoids called sartorypyrones. The biosynthesis of sartorypyrones begins with the production of triacetic acid lactone (TAL) by the NR-PKS spyA using one molecule of acetyl-CoA and two molecules of malonyl-CoA. As spyA lacks a thioesterase (TE) domain, TAL is likely generated through self-release from spyA by spontaneous lactonization. After production of TAL, the prenyltransferase spyF then conjugates geranylgeranyl pyrophosphate (GGPP) to TAL to form geranylgeranyl-triacetate lactone, for which the pathway-specific geranylgeranyl pyrophosphate synthase (GGPS) spyE is required to provide GGPP. Subsequently, geranylgeranyl-triacetate lactone is epoxidized at the terminal olein by the FAD-dependent monooxygenase spyC, followed by cyclization of the terpenoid component catalyzed by the terpene cyclase spyD to produce both the bicyclic sartorypyrone F and the monocyclic sartorypyrone D. Finally, the last step of the biosynthesis involves the acetylation of the meroterpenoids sartorypyrones D and F by the acetyltransferase SpyB to produce sartorypyrones A and G, respectively. The protein is Non-reducing polyketide synthase spyA of Aspergillus fumigatus (strain ATCC MYA-4609 / CBS 101355 / FGSC A1100 / Af293) (Neosartorya fumigata).